We begin with the raw amino-acid sequence, 841 residues long: MGKKGKVGKSRRDKFYHLAKETGYRSRSAFKLIQLNRRFQFLQKARALLDLCAAPGGWLQVAAKFMPVSSLIVGVDLVPIKPLPNVVTLQEDITTERCRQALRKELKTWKVDVVLNDGAPNVGASWVHDAYSQAHLTLMALRLACDFLARGGSFITKVFRSRDYQPLLWIFQQLFRRVQATKPQASRHESAEIFVVCQGFLAPDKVDSKFFDPKFAFKEVEVQAKTVTELVTKKKPKAEGYAEGDLTLYHRTSVTDFLRAANPVDFLSKASEIMVDDEELAQHPATTEDIRVCCQDIRVLGRKELRSLLNWRTKLRRYVAKKLKEQAKALDISLSSGEEDEGNEEDSTAGTTEQPSKEEEEEEQLNQTLAEMKAQEVAELKRKKKKLLREQRKQRERVELKMDLPGVSIADEGETGMFSLRTIRGQQLLEEVTQGDMSAADTFLSDLPRDDIYVSDVEDDGDDTSLDSDLDPEELAGVRGHQGLRDQKRVRLTEVQDDKEEEEEEENPLLVPLEEKAVLQEEQANLWFSKGSFAGIEDDADEALEISQAQLLFESQRKGRQQQLPQTLPSCLKTEIMSPLYQDEAPKGTEASSGTEAATGLKGEEKDGISDSDSSSSSEEEESWEPVRGKKRSRGPKSDDDGFEIVPIEDPAKHRILDPEGLALGAVIASSKKAKRDLIDNSFNRYTFNEDEGELPEWFVQEEKQHRIRQLPIGKKEMEHYRKRWREINARPIKKVAEAKARKKRRMLKRLEQTRKKAEAVVNTVDISEREKVAQLRSLYKKAGLGKEKRHVTYVVAKKGVGRKVRRPAGVRGHFKVVDSRMKKDQRAQQRKEQKKKHKRK.

Residues glycine 56, tryptophan 58, aspartate 76, aspartate 92, and aspartate 117 each coordinate S-adenosyl-L-methionine. Lysine 157 serves as the catalytic Proton acceptor. Positions 332-366 are disordered; it reads ISLSSGEEDEGNEEDSTAGTTEQPSKEEEEEEQLN. 5 positions are modified to phosphoserine: serine 333, serine 335, serine 336, serine 347, and serine 356. The span at 337 to 347 shows a compositional bias: acidic residues; sequence GEEDEGNEEDS. Residues 356 to 404 are a coiled coil; it reads SKEEEEEEQLNQTLAEMKAQEVAELKRKKKKLLREQRKQRERVELKMDL. Lysine 357 is covalently cross-linked (Glycyl lysine isopeptide (Lys-Gly) (interchain with G-Cter in SUMO2)). A Citrulline modification is found at arginine 389. Residues 454–482 form a disordered region; it reads VSDVEDDGDDTSLDSDLDPEELAGVRGHQ. Acidic residues predominate over residues 456 to 474; the sequence is DVEDDGDDTSLDSDLDPEE. Serine 547 carries the post-translational modification Phosphoserine. A Phosphothreonine modification is found at threonine 567. Lysine 573 is covalently cross-linked (Glycyl lysine isopeptide (Lys-Gly) (interchain with G-Cter in SUMO2)). Phosphoserine is present on serine 578. The tract at residues 579–654 is disordered; it reads PLYQDEAPKG…IVPIEDPAKH (76 aa). A Glycyl lysine isopeptide (Lys-Gly) (interchain with G-Cter in SUMO2) cross-link involves residue lysine 637. Serine 638 is subject to Phosphoserine. Residue lysine 653 forms a Glycyl lysine isopeptide (Lys-Gly) (interchain with G-Cter in SUMO2) linkage. A Phosphoserine modification is found at serine 670. Lysine 672 participates in a covalent cross-link: Glycyl lysine isopeptide (Lys-Gly) (interchain with G-Cter in SUMO2). Position 682 is a phosphoserine (serine 682). Lysine 704 is covalently cross-linked (Glycyl lysine isopeptide (Lys-Gly) (interchain with G-Cter in SUMO2)). Positions 733 to 771 form a coiled coil; that stretch reads IKKVAEAKARKKRRMLKRLEQTRKKAEAVVNTVDISERE. Residue arginine 777 is modified to Citrulline. Positions 805-815 are enriched in basic residues; it reads VRRPAGVRGHF. A disordered region spans residues 805–841; sequence VRRPAGVRGHFKVVDSRMKKDQRAQQRKEQKKKHKRK. Over residues 816 to 832 the composition is skewed to basic and acidic residues; the sequence is KVVDSRMKKDQRAQQRK.

This sequence belongs to the class I-like SAM-binding methyltransferase superfamily. RNA methyltransferase RlmE family. SPB1 subfamily. As to quaternary structure, interacts with NIP7. Citrullinated by PADI4.

It is found in the nucleus. The protein localises to the nucleolus. It carries out the reaction a ribonucleotide in rRNA + S-adenosyl-L-methionine = a 2'-O-methylribonucleotide in rRNA + S-adenosyl-L-homocysteine + H(+). In terms of biological role, RNA 2'-O-methyltransferase involved in the processing of the 34S pre-rRNA to 18S rRNA and in 40S ribosomal subunit formation. This Pongo abelii (Sumatran orangutan) protein is pre-rRNA 2'-O-ribose RNA methyltransferase FTSJ3.